A 269-amino-acid chain; its full sequence is Shikimate dehydrogenase (NADP(+)) (269 aa).

Shikimate is bound by residues 13-15 (SLS) and Thr60. The active-site Proton acceptor is Lys64. Residue Glu76 participates in NADP(+) binding. Shikimate is bound by residues Asn85 and Asp100. Residues 124–128 (GAGGA), 148–153 (NRTMSR), and Ile209 contribute to the NADP(+) site. Shikimate is bound at residue Tyr211. Residue Gly232 coordinates NADP(+). Gln239 is a shikimate binding site.

This sequence belongs to the shikimate dehydrogenase family. As to quaternary structure, monomer or homodimer.

The catalysed reaction is shikimate + NADP(+) = 3-dehydroshikimate + NADPH + H(+). It functions in the pathway metabolic intermediate biosynthesis; chorismate biosynthesis; chorismate from D-erythrose 4-phosphate and phosphoenolpyruvate: step 4/7. Its function is as follows. Involved in the biosynthesis of the chorismate, which leads to the biosynthesis of aromatic amino acids. Catalyzes the reversible NADPH linked reduction of 3-dehydroshikimate (DHSA) to yield shikimate (SA). It can also use NAD to oxidize shikimate. The protein is Shikimate dehydrogenase (NADP(+)) of Staphylococcus epidermidis (strain ATCC 35984 / DSM 28319 / BCRC 17069 / CCUG 31568 / BM 3577 / RP62A).